The sequence spans 500 residues: Abscisic acid 8'-hydroxylase 3 (500 aa).

The chain crosses the membrane as a helical span at residues 3 to 23 (ASFVIVIVISFFISLAFMCYV). A heme-binding site is contributed by cysteine 426.

The protein belongs to the cytochrome P450 family. The cofactor is heme.

It is found in the membrane. It carries out the reaction 2-cis-(+)-abscisate + reduced [NADPH--hemoprotein reductase] + O2 = (+)-8'-hydroxyabscisate + oxidized [NADPH--hemoprotein reductase] + H2O + H(+). The protein operates within plant hormone degradation; abscisic acid degradation. Functionally, involved in the oxidative degradation of abscisic acid. In Oryza sativa subsp. indica (Rice), this protein is Abscisic acid 8'-hydroxylase 3 (CYP707A7).